The primary structure comprises 203 residues: Endoplasmic reticulum transmembrane protein 3 (203 aa).

Residues 1–6 (MSLYYT) lie on the Lumenal side of the membrane. Residues 7 to 27 (LVFAILVVEIFMFSILALPIP) form a helical membrane-spanning segment. The Cytoplasmic segment spans residues 28 to 45 (SRYRRPLTLLLLKPFKSS). A helical transmembrane segment spans residues 46 to 66 (TVQVAIKCVLGFILLLFIDCI). Residues 67–110 (NRVYSIDKELQLSSASQNNGAIIAQDRIEVLSRKFFAQRNMYLT) are Lumenal-facing. A helical transmembrane segment spans residues 111–131 (GITLFLTFVVVRTFGLVIELL). Over 132-203 (TMKDIYRASP…KSESLQEEIN (72 aa)) the chain is Cytoplasmic. Residues 142 to 171 (PVASSDVKKNDSVTAEAAAQSGASKDDHGD) are disordered.

Belongs to the BCAP29/BCAP31 family.

The protein resides in the endoplasmic reticulum membrane. May play a role in anterograde transport of membrane proteins from the endoplasmic reticulum to the Golgi. May be involved in invertase secretion. The sequence is that of Endoplasmic reticulum transmembrane protein 3 (YET3) from Saccharomyces cerevisiae (strain ATCC 204508 / S288c) (Baker's yeast).